A 469-amino-acid chain; its full sequence is MKEFWQTCVSRLEQELPPQQISAWIRPLVPLAYDEAQAVLRVAAPNRFKLDWVRKNFSHQIEALAAEWYQRPVQVTFELPGTSSAPRIPMAVPRPVAVSVPAVVAAVQQASEPAPPAPASADAANIVYERSRLNTDLTFENFVTGKANQLARAAALQVAENPGTSYNPLFLYGGVGLGKTHLIHAIGNAMVAAGTGVRVRYVHADQYVSDVVKAYQRKAFDDFKRYYHSLDLLLIDDIQFFSGKNRTQEEFFYAFEAMVAQRKQIIITSDTYPKELSGIDSRLISRFDSGLTVAIEPPELEMRVAILLRKAESEGVPMPEEVAFFIAKHLRSNVRELEGALRKVLAYARFHGRDVLTVDVCKEALKDLLSVSNGQITVENIQKTVADFYKIKVADMYSKRRPANIALPRQVAMYLAKELTQKSLPEIGDLFGGRDHTTVLHAVRKISDARAKQAELNHTLHVLEQTLKG.

Positions 1-71 are domain I, interacts with DnaA modulators; that stretch reads MKEFWQTCVS…EALAAEWYQR (71 aa). Residues 71-131 are domain II; the sequence is RPVQVTFELP…DAANIVYERS (61 aa). Residues 132 to 348 are domain III, AAA+ region; the sequence is RLNTDLTFEN…GALRKVLAYA (217 aa). Positions 176, 178, 179, and 180 each coordinate ATP. A domain IV, binds dsDNA region spans residues 349–469; the sequence is RFHGRDVLTV…LHVLEQTLKG (121 aa).

The protein belongs to the DnaA family. As to quaternary structure, oligomerizes as a right-handed, spiral filament on DNA at oriC.

The protein resides in the cytoplasm. Its function is as follows. Plays an essential role in the initiation and regulation of chromosomal replication. ATP-DnaA binds to the origin of replication (oriC) to initiate formation of the DNA replication initiation complex once per cell cycle. Binds the DnaA box (a 9 base pair repeat at the origin) and separates the double-stranded (ds)DNA. Forms a right-handed helical filament on oriC DNA; dsDNA binds to the exterior of the filament while single-stranded (ss)DNA is stabiized in the filament's interior. The ATP-DnaA-oriC complex binds and stabilizes one strand of the AT-rich DNA unwinding element (DUE), permitting loading of DNA polymerase. After initiation quickly degrades to an ADP-DnaA complex that is not apt for DNA replication. Binds acidic phospholipids. The polypeptide is Chromosomal replication initiator protein DnaA (Bordetella parapertussis (strain 12822 / ATCC BAA-587 / NCTC 13253)).